The following is a 185-amino-acid chain: MMLIIGLGNPGKEYEHTRHNIGFIALENIAKQYETSFSVKKKFHCEIAESTNNGQKLIFVKPTTYMNLSGKSVIAVKTYYNIPLEKIFVIHDDIDLELGKIKFKTGGGNGGHNGLKSIDGIIGNNYHRIRIGVGRPQNSQDVADYVLNNFSKTEYVIAEQAIDKITDNFNLILENKLEEFKSKMV.

Residue Y14 participates in tRNA binding. The Proton acceptor role is filled by H19. Y65, N67, and N113 together coordinate tRNA.

This sequence belongs to the PTH family. In terms of assembly, monomer.

The protein localises to the cytoplasm. It carries out the reaction an N-acyl-L-alpha-aminoacyl-tRNA + H2O = an N-acyl-L-amino acid + a tRNA + H(+). Hydrolyzes ribosome-free peptidyl-tRNAs (with 1 or more amino acids incorporated), which drop off the ribosome during protein synthesis, or as a result of ribosome stalling. Its function is as follows. Catalyzes the release of premature peptidyl moieties from peptidyl-tRNA molecules trapped in stalled 50S ribosomal subunits, and thus maintains levels of free tRNAs and 50S ribosomes. This chain is Peptidyl-tRNA hydrolase, found in Rickettsia bellii (strain RML369-C).